Reading from the N-terminus, the 148-residue chain is Deoxyuridine 5'-triphosphate nucleotidohydrolase (148 aa).

Substrate contacts are provided by residues 68–70 (RSG), Asn-81, 85–87 (TID), and Lys-95.

This sequence belongs to the dUTPase family. The cofactor is Mg(2+).

The catalysed reaction is dUTP + H2O = dUMP + diphosphate + H(+). Its pathway is pyrimidine metabolism; dUMP biosynthesis; dUMP from dCTP (dUTP route): step 2/2. Its function is as follows. This enzyme is involved in nucleotide metabolism: it produces dUMP, the immediate precursor of thymidine nucleotides and it decreases the intracellular concentration of dUTP so that uracil cannot be incorporated into DNA. This chain is Deoxyuridine 5'-triphosphate nucleotidohydrolase, found in Rickettsia prowazekii (strain Madrid E).